The following is a 231-amino-acid chain: Small ribosomal subunit protein uS3 (231 aa).

The KH type-2 domain occupies 18-97 (VDEYLAKQFY…NPELNARVMA (80 aa)).

This sequence belongs to the universal ribosomal protein uS3 family. In terms of assembly, part of the 30S ribosomal subunit.

Its function is as follows. Binds the lower part of the 30S subunit head. In Sulfolobus acidocaldarius (strain ATCC 33909 / DSM 639 / JCM 8929 / NBRC 15157 / NCIMB 11770), this protein is Small ribosomal subunit protein uS3.